A 61-amino-acid polypeptide reads, in one-letter code: Metallothionein-1C (61 aa).

Residues 1-29 (MDPNCSCSTGGSCSCAGSCTCKACRCTSC) form a beta region. A divalent metal cation is bound by residues Cys5, Cys7, Cys13, Cys15, Cys19, Cys21, Cys24, Cys26, Cys29, Cys33, Cys34, Cys36, Cys37, Cys41, Cys44, Cys48, Cys50, Cys57, Cys59, and Cys60. Residues 30–61 (KKSCCSCCPAGCARCAQGCICKGASDKCSCCA) are alpha.

It belongs to the metallothionein superfamily. Type 1 family. In terms of assembly, monomer.

Its function is as follows. Metallothioneins have a high content of cysteine residues that bind various heavy metals; these proteins are transcriptionally regulated by both heavy metals and glucocorticoids. This Sus scrofa (Pig) protein is Metallothionein-1C (MT1C).